Here is a 236-residue protein sequence, read N- to C-terminus: Leucyl/phenylalanyl-tRNA--protein transferase (236 aa).

Belongs to the L/F-transferase family.

The protein resides in the cytoplasm. It carries out the reaction N-terminal L-lysyl-[protein] + L-leucyl-tRNA(Leu) = N-terminal L-leucyl-L-lysyl-[protein] + tRNA(Leu) + H(+). The enzyme catalyses N-terminal L-arginyl-[protein] + L-leucyl-tRNA(Leu) = N-terminal L-leucyl-L-arginyl-[protein] + tRNA(Leu) + H(+). The catalysed reaction is L-phenylalanyl-tRNA(Phe) + an N-terminal L-alpha-aminoacyl-[protein] = an N-terminal L-phenylalanyl-L-alpha-aminoacyl-[protein] + tRNA(Phe). Functionally, functions in the N-end rule pathway of protein degradation where it conjugates Leu, Phe and, less efficiently, Met from aminoacyl-tRNAs to the N-termini of proteins containing an N-terminal arginine or lysine. The chain is Leucyl/phenylalanyl-tRNA--protein transferase from Shewanella sp. (strain MR-7).